The primary structure comprises 544 residues: Putative ankyrin repeat protein L289 (544 aa).

11 ANK repeats span residues 31 to 71 (KNFS…AQNE), 72 to 105 (HGWT…DPNI), 110 to 143 (YSQT…DINH), 147 to 181 (LGVS…DINS), 185 to 218 (QGNT…DPNI), 222 to 255 (KGTT…NINF), 259 to 297 (YNET…DIPI), 300 to 339 (DKLS…IQCS), 340 to 374 (NGKT…NPNI), 378 to 413 (QGKT…TIDN), and 414 to 447 (TGQS…CVNK).

The polypeptide is Putative ankyrin repeat protein L289 (Acanthamoeba polyphaga mimivirus (APMV)).